The chain runs to 256 residues: MQSRLSWIFNPKTGKTVMLAFDHGYFQGPTTGLERIDINIAPLFEHADVLMCTRGILRSVVPPATNKPGVLRASGANSILAELSNEAVALSMDDAVRLNSCAVAAQVYIGSEYEHQSIKNIIQLVDAGMKVGMPTMAVTGVGKDMVRDQRYFSLATRIAAEMGAQIIKTYYVEKGFERIVAGCPVPIVIAGGKKLPERETLEMCWQAIDQGASGVDMGRNIFQSDHPVAMMKAVQAVVHHNETADRAYELYLSEKQ.

Lysine 168 functions as the Schiff-base intermediate with substrate in the catalytic mechanism.

The protein belongs to the DeoC/FbaB aldolase family. As to quaternary structure, homodecamer.

Its subcellular location is the cytoplasm. The catalysed reaction is dihydroxyacetone phosphate + acetyl-CoA = 3-hydroxy-2,4-dioxopentyl phosphate + CoA. Functionally, involved in the degradation of phospho-AI-2, thereby terminating induction of the lsr operon and closing the AI-2 signaling cycle. Catalyzes the transfer of an acetyl moiety from 3-hydroxy-5-phosphonooxypentane-2,4-dione to CoA to form glycerone phosphate and acetyl-CoA. This is 3-hydroxy-5-phosphonooxypentane-2,4-dione thiolase (lsrF) from Shigella flexneri serotype 5b (strain 8401).